A 1144-amino-acid chain; its full sequence is Probable translation initiation factor IF-2 (1144 aa).

Residues 232–362 (FAGVMFGDGS…LSLLLLRFGI (131 aa)) form the DOD-type homing endonuclease domain. The region spanning 551–768 (TTETHNFVAN…LIAGLSQKYL (218 aa)) is the tr-type G domain. GTP is bound by residues 624-628 (DTPGH) and 678-681 (NKID).

It belongs to the TRAFAC class translation factor GTPase superfamily. Classic translation factor GTPase family. IF-2 subfamily. This protein undergoes a protein self splicing that involves a post-translational excision of the intervening region (intein) followed by peptide ligation.

Functionally, function in general translation initiation by promoting the binding of the formylmethionine-tRNA to ribosomes. Seems to function along with eIF-2. This chain is Probable translation initiation factor IF-2 (infB), found in Thermococcus kodakarensis (strain ATCC BAA-918 / JCM 12380 / KOD1) (Pyrococcus kodakaraensis (strain KOD1)).